The following is an 854-amino-acid chain: Envelope glycoprotein gp160 (854 aa).

Residues 1 to 31 (MKVMEKKKRDWNSLSIITIITIILLTPCLTS) form the signal peptide. Over 32 to 675 (ELWVTVYYGV…ITKWLWYIKI (644 aa)) the chain is Extracellular. 6 disulfides stabilise this stretch: Cys-53–Cys-73, Cys-118–Cys-203, Cys-125–Cys-194, Cys-130–Cys-155, Cys-216–Cys-245, and Cys-226–Cys-237. The interval 130 to 154 (CSKANFSQAKNLTNQTSSPPLEMKN) is V1. Asn-134, Asn-140, Asn-143, Asn-154, Asn-158, Asn-186, and Asn-195 each carry an N-linked (GlcNAc...) asparagine; by host glycan. The tract at residues 155–194 (CSFNVTTELRDKKKQVYSLFYVEDVVNLGNENNTYRIINC) is V2. Residues Asn-239, Asn-260, Asn-267, Asn-274, Asn-299, Asn-331, Asn-336, Asn-351, and Asn-356 are each glycosylated (N-linked (GlcNAc...) asparagine; by host). A V3 region spans residues 294–327 (CHRPGNNTRGEVQIGPGMTFYNIENVVGDTRSAY). Cys-294 and Cys-328 form a disulfide bridge. Positions 362-372 (ASGGDPEVTHH) are CD4-binding loop. 2 disulfide bridges follow: Cys-376–Cys-429 and Cys-383–Cys-402. Positions 383–402 (CNTSQIFTDNITNGIIILPC) are V4. N-linked (GlcNAc...) asparagine; by host glycosylation is found at Asn-384, Asn-392, Asn-426, Asn-432, Asn-446, and Asn-450. 2 V5 regions span residues 445–456 (TNNSGNLTFRPT) and 447–456 (NSGNLTFRPT). Residues 501 to 522 (AAFGLGALFLGFLGAAGSTMGA) are fusion peptide. The segment at 564–582 (KQLQARLLAVERYLQDQQI) is immunosuppression. A disulfide bridge links Cys-588 with Cys-594. N-linked (GlcNAc...) asparagine; by host glycosylation is found at Asn-601, Asn-608, Asn-616, and Asn-628. A coiled-coil region spans residues 624 to 658 (KLVSNYTGKIFGLLEEAQSQQEKNERDLLELDQWA). Positions 653–674 (ELDQWASLWNWFDITKWLWYIK) are MPER; binding to GalCer. A helical membrane pass occupies residues 676 to 696 (FLMAVGGIIGLRIIMTVFSVV). Topologically, residues 697 to 854 (RRVRQGYSPL…IRQGLERALL (158 aa)) are cytoplasmic. The short motif at 703–706 (YSPL) is the YXXL motif; contains endocytosis signal element. A Di-leucine internalization motif motif is present at residues 853-854 (LL).

It belongs to the HIV-1 env protein family. In terms of assembly, the mature envelope protein (Env) consists of a homotrimer of non-covalently associated gp120-gp41 heterodimers. The resulting complex protrudes from the virus surface as a spike. There seems to be as few as 10 spikes on the average virion. Interacts with host CD4, CCR5 and CXCR4. Gp120 also interacts with the C-type lectins CD209/DC-SIGN and CLEC4M/DC-SIGNR (collectively referred to as DC-SIGN(R)). Gp120 and gp41 interact with GalCer. Gp120 interacts with host ITGA4/ITGB7 complex; on CD4+ T-cells, this interaction results in rapid activation of integrin ITGAL/LFA-1, which facilitates efficient cell-to-cell spreading of HIV-1. Gp120 interacts with cell-associated heparan sulfate; this interaction increases virus infectivity on permissive cells and may be involved in infection of CD4- cells. The mature envelope protein (Env) consists of a homotrimer of non-covalently associated gp120-gp41 heterodimers. The resulting complex protrudes from the virus surface as a spike. There seems to be as few as 10 spikes on the average virion. Post-translationally, highly glycosylated by host. The high number of glycan on the protein is reffered to as 'glycan shield' because it contributes to hide protein sequence from adaptive immune system. In terms of processing, palmitoylation of the transmembrane protein and of Env polyprotein (prior to its proteolytic cleavage) is essential for their association with host cell membrane lipid rafts. Palmitoylation is therefore required for envelope trafficking to classical lipid rafts, but not for viral replication. Specific enzymatic cleavages in vivo yield mature proteins. Envelope glycoproteins are synthesized as an inactive precursor that is heavily N-glycosylated and processed likely by host cell furin in the Golgi to yield the mature SU and TM proteins. The cleavage site between SU and TM requires the minimal sequence [KR]-X-[KR]-R. About 2 of the 9 disulfide bonds of gp41 are reduced by P4HB/PDI, following binding to CD4 receptor.

It localises to the virion membrane. It is found in the host cell membrane. Its subcellular location is the host endosome membrane. Attaches the virus to the host lymphoid cell by binding to the primary receptor CD4. This interaction induces a structural rearrangement creating a high affinity binding site for a chemokine coreceptor like CXCR4 and/or CCR5. Acts as a ligand for CD209/DC-SIGN and CLEC4M/DC-SIGNR, which are respectively found on dendritic cells (DCs), and on endothelial cells of liver sinusoids and lymph node sinuses. These interactions allow capture of viral particles at mucosal surfaces by these cells and subsequent transmission to permissive cells. HIV subverts the migration properties of dendritic cells to gain access to CD4+ T-cells in lymph nodes. Virus transmission to permissive T-cells occurs either in trans (without DCs infection, through viral capture and transmission), or in cis (following DCs productive infection, through the usual CD4-gp120 interaction), thereby inducing a robust infection. In trans infection, bound virions remain infectious over days and it is proposed that they are not degraded, but protected in non-lysosomal acidic organelles within the DCs close to the cell membrane thus contributing to the viral infectious potential during DCs' migration from the periphery to the lymphoid tissues. On arrival at lymphoid tissues, intact virions recycle back to DCs' cell surface allowing virus transmission to CD4+ T-cells. In terms of biological role, acts as a class I viral fusion protein. Under the current model, the protein has at least 3 conformational states: pre-fusion native state, pre-hairpin intermediate state, and post-fusion hairpin state. During fusion of viral and target intracellular membranes, the coiled coil regions (heptad repeats) assume a trimer-of-hairpins structure, positioning the fusion peptide in close proximity to the C-terminal region of the ectodomain. The formation of this structure appears to drive apposition and subsequent fusion of viral and target cell membranes. Complete fusion occurs in host cell endosomes and is dynamin-dependent, however some lipid transfer might occur at the plasma membrane. The virus undergoes clathrin-dependent internalization long before endosomal fusion, thus minimizing the surface exposure of conserved viral epitopes during fusion and reducing the efficacy of inhibitors targeting these epitopes. Membranes fusion leads to delivery of the nucleocapsid into the cytoplasm. Its function is as follows. Oligomerizes in the host endoplasmic reticulum into predominantly trimers. In a second time, gp160 transits in the host Golgi, where glycosylation is completed. The precursor is then proteolytically cleaved in the trans-Golgi and thereby activated by cellular furin or furin-like proteases to produce gp120 and gp41. This is Envelope glycoprotein gp160 from Pan (chimpanzees).